The sequence spans 501 residues: Pyruvate kinase (501 aa).

Substrate is bound at residue Arg50. K(+)-binding residues include Asn52, Ser54, Asp85, and Thr86. 52-55 contributes to the ATP binding site; it reads NFSH. The ATP site is built by Arg92 and Lys178. Glu243 is a Mg(2+) binding site. Positions 266, 267, and 299 each coordinate substrate. Asp267 serves as a coordination point for Mg(2+).

The protein belongs to the pyruvate kinase family. As to quaternary structure, homotetramer. Mg(2+) serves as cofactor. K(+) is required as a cofactor.

It catalyses the reaction pyruvate + ATP = phosphoenolpyruvate + ADP + H(+). Its pathway is carbohydrate degradation; glycolysis; pyruvate from D-glyceraldehyde 3-phosphate: step 5/5. This chain is Pyruvate kinase (PYK1), found in Lachancea kluyveri (strain ATCC 58438 / CBS 3082 / BCRC 21498 / NBRC 1685 / JCM 7257 / NCYC 543 / NRRL Y-12651) (Yeast).